A 1058-amino-acid polypeptide reads, in one-letter code: Zinc finger protein 865 (1058 aa).

3 disordered regions span residues 1–24 (MEAN…EDGV), 58–134 (LPCT…PPLF), and 156–201 (GNLK…ACDP). Positions 8–21 (SGAGGGGSSGIGGE) are enriched in gly residues. The segment covering 61–78 (TPGPPPQPPPQPPPPQYD) has biased composition (pro residues). Residues 93 to 113 (SSSSSSSSSSSSSSSSSSSSS) are compositionally biased toward low complexity. The span at 120–133 (PPLPPTFGAPPPPL) shows a compositional bias: pro residues. A compositionally biased stretch (low complexity) spans 172-187 (GLGTPTGTPGPLTTPS). 2 consecutive C2H2-type zinc fingers follow at residues 220–242 (FPCG…MLVH) and 248–270 (YECG…RRCH). A disordered region spans residues 269-342 (CHKDVPPTPT…PPGVAMPPSA (74 aa)). Residues 294-324 (PVSTASATASSDPAAVSSGPSATPATPATST) are compositionally biased toward low complexity. C2H2-type zinc fingers lie at residues 350–372 (FACS…QIIH), 378–400 (FSCS…VKTH), 407–429 (LPCG…QAAH), 439–461 (YPCD…KAAH), 546–568 (FCCG…ERIH), 574–596 (HQCP…HVVH), 602–624 (YKCE…RQVH), 664–686 (YACS…KEAH), and 692–714 (YGCD…KLVH). Residues 459–486 (AAHAPPVATEPAKDGAASVPQPPPPFPP) form a disordered region. The disordered stretch occupies residues 721 to 743 (LLAPTPSGPQSSDGGSSGGGTDA). C2H2-type zinc fingers lie at residues 791 to 813 (FSCA…KYVH), 819 to 841 (LGCG…RRSH), 847 to 869 (FRCP…QRCH), 875 to 897 (YRCG…RVVH), 903 to 925 (FKCG…RRLH), 931 to 953 (QRCG…QRLH), 959 to 981 (YRCE…QRAH), 988 to 1010 (LRCP…LAAH), and 1016 to 1038 (FRCS…RLMH). A Glycyl lysine isopeptide (Lys-Gly) (interchain with G-Cter in SUMO2) cross-link involves residue Lys801. Residue Lys1039 forms a Glycyl lysine isopeptide (Lys-Gly) (interchain with G-Cter in SUMO2) linkage.

It belongs to the krueppel C2H2-type zinc-finger protein family.

It is found in the nucleus. May be involved in transcriptional regulation. This chain is Zinc finger protein 865 (Znf865), found in Mus musculus (Mouse).